The chain runs to 463 residues: Glutamate--tRNA ligase 2 (463 aa).

The 'HIGH' region motif lies at 11–21 (PSPTGYLHIGG). A 'KMSKS' region motif is present at residues 240–244 (KLSKR). Lysine 243 serves as a coordination point for ATP.

The protein belongs to the class-I aminoacyl-tRNA synthetase family. Glutamate--tRNA ligase type 1 subfamily. In terms of assembly, monomer.

Its subcellular location is the cytoplasm. The enzyme catalyses tRNA(Glu) + L-glutamate + ATP = L-glutamyl-tRNA(Glu) + AMP + diphosphate. Its function is as follows. Catalyzes the attachment of glutamate to tRNA(Glu) in a two-step reaction: glutamate is first activated by ATP to form Glu-AMP and then transferred to the acceptor end of tRNA(Glu). This Campylobacter jejuni subsp. jejuni serotype O:2 (strain ATCC 700819 / NCTC 11168) protein is Glutamate--tRNA ligase 2.